The primary structure comprises 299 residues: Acetylglutamate kinase (299 aa).

Residues 72–73 (GG), Arg94, and Asn196 each bind substrate.

The protein belongs to the acetylglutamate kinase family. ArgB subfamily.

The protein localises to the cytoplasm. It catalyses the reaction N-acetyl-L-glutamate + ATP = N-acetyl-L-glutamyl 5-phosphate + ADP. It functions in the pathway amino-acid biosynthesis; L-arginine biosynthesis; N(2)-acetyl-L-ornithine from L-glutamate: step 2/4. Its function is as follows. Catalyzes the ATP-dependent phosphorylation of N-acetyl-L-glutamate. The polypeptide is Acetylglutamate kinase (Burkholderia cenocepacia (strain ATCC BAA-245 / DSM 16553 / LMG 16656 / NCTC 13227 / J2315 / CF5610) (Burkholderia cepacia (strain J2315))).